A 285-amino-acid chain; its full sequence is Flagellar filament core protein flaB2 (285 aa).

Belongs to the bacterial flagellin family. In terms of assembly, the flagellum consists of an outer layer composed of two sheath proteins, flaA1 (44 kDa) and flaA2 (35 kDa) around a core that contains three proteins flaB1 (37 kDa), flaB2 (34 kDa) and flaB3 (32 kDa).

It is found in the periplasmic flagellum. The protein resides in the periplasm. Component of the core of the flagella. The chain is Flagellar filament core protein flaB2 (flaB2) from Brachyspira hyodysenteriae (Treponema hyodysenteriae).